A 574-amino-acid polypeptide reads, in one-letter code: MANTPHGGVLKDLLARDAPRHDQLAAEAEILPALTLTERQLCDLELIMNGGFSPLEGFMNQKDFDGVCENCRLADGNVFSMPITLDASQKTISELKLQAGSRLTLRDFRDDRNLAILTIDDIYRADKQKEAKLVFGGDPEHPAIKYLNNTVQEFYIGGKIEAVNKLNHYDYVALRYTPAELRVHFDKLGWSRVVAFQTRNPMHRAHRELTVRAARARQANVLIHPVVGLTKPGDIDHFTRVRAYQALLPRYPNGMAVLGLLGLAMRMGGPREAIWHAIIRKNHGATHFIVGRDHAGPGKNSKGEEFYGPYDAQHAVEKYKDELGIEVVEFQQVTYLPDTDEYRPKDEVPAGVKTLDISGTELRKRLRTGAHIPEWFSYPEVVKILRESNPPRASQGFTIFLTGYMNSGKDAIARALQVTLNQQGGRSVTLLLGDTVRHELSSELGFSREDRHTNIQRIAFVAGELTRAGAAVIAAPIAPYEESRKAAREAVAGSGGNFFLVHVATPLEHCEKTDKRGIYAKARRGEIKGFTGVDDPYEAPANADLTVDVSKQSVRSIVHEIILMLESEGYFERL.

Residues 1–169 (MANTPHGGVL…IEAVNKLNHY (169 aa)) are N-terminal. Residues 170 to 394 (DYVALRYTPA…LRESNPPRAS (225 aa)) form a catalytic region. Q197 serves as a coordination point for sulfate. Residues 197–200 (QTRN) and 291–294 (GRDH) each bind ATP. Catalysis depends on residues T198, R199, and N200. R199 contributes to the sulfate binding site. A sulfate-binding site is contributed by A295. V333 lines the ATP pocket. The interval 395–574 (QGFTIFLTGY…LESEGYFERL (180 aa)) is allosteric regulation domain; adenylyl-sulfate kinase-like. 3'-phosphoadenylyl sulfate contacts are provided by residues 434 to 437 (DTVR), R451, 477 to 478 (IA), and R516.

The protein in the N-terminal section; belongs to the sulfate adenylyltransferase family. In the C-terminal section; belongs to the APS kinase family. As to quaternary structure, homohexamer. Dimer of trimers.

The protein localises to the cytoplasm. The enzyme catalyses sulfate + ATP + H(+) = adenosine 5'-phosphosulfate + diphosphate. The protein operates within sulfur metabolism; hydrogen sulfide biosynthesis; sulfite from sulfate: step 1/3. Allosterically inhibited by 3'-phosphoadenosine 5'-phosphosulfate (PAPS). Catalyzes the first intracellular reaction of sulfate assimilation, forming adenosine-5'-phosphosulfate (APS) from inorganic sulfate and ATP. Plays an important role in sulfate activation as a component of the biosynthesis pathway of sulfur-containing amino acids. The protein is Sulfate adenylyltransferase of Aspergillus niger.